Consider the following 476-residue polypeptide: MYFQKKETFFMPLTKDTLTFECETGNYHTFCPISCVAWLYQKIEDSFFLVVGTKTCGYFLQNALGVMIFAEPRYAMAELEEGDISAQLNDYEELKRLCSQIKKDRNPSVIVWIGTCTTEIIKMDLEGMAPRLEAEIDIPIVVARANGLDYAFTQGEDTVLAAMAHRCPDINSVTQNINIEDNGRERLLSFLPSKEKASNERKNESTHPPLVLFGSLPSNVTSQLTLELKKQNIDVSGWLPSQRYAELPSVGEGVYVCGVNPFLSRTATTLMRRRKCKLIGAPFPIGPDGTRAWIEKICSVFGIQPIGLEEREKQIWNSLQDYLNLVRGKSVFFMGDNLLEISLARFLIRCGMIVYEIGIPYMDKRYQAAELALLEKTCQEMNVSLPRIVEKPDNYNQVQRMRELQPDLAITGMAHANPLEARGISTKWSVEFTFAQIHGFTNARDILELVTRPLRRNLSLEQLGWTGLVKRNKLTA.

[4Fe-4S] cluster-binding residues include cysteine 31, cysteine 56, and cysteine 116.

It belongs to the BchN/ChlN family. Protochlorophyllide reductase is composed of three subunits; ChlL, ChlN and ChlB. Forms a heterotetramer of two ChlB and two ChlN subunits. The cofactor is [4Fe-4S] cluster.

It is found in the plastid. It localises to the chloroplast. It catalyses the reaction chlorophyllide a + oxidized 2[4Fe-4S]-[ferredoxin] + 2 ADP + 2 phosphate = protochlorophyllide a + reduced 2[4Fe-4S]-[ferredoxin] + 2 ATP + 2 H2O. Its pathway is porphyrin-containing compound metabolism; chlorophyll biosynthesis (light-independent). In terms of biological role, component of the dark-operative protochlorophyllide reductase (DPOR) that uses Mg-ATP and reduced ferredoxin to reduce ring D of protochlorophyllide (Pchlide) to form chlorophyllide a (Chlide). This reaction is light-independent. The NB-protein (ChlN-ChlB) is the catalytic component of the complex. This chain is Light-independent protochlorophyllide reductase subunit N, found in Staurastrum punctulatum (Green alga).